Consider the following 337-residue polypeptide: Lipoyl synthase (337 aa).

[4Fe-4S] cluster-binding residues include Cys81, Cys86, Cys92, Cys107, Cys111, Cys114, and Ser323. A Radical SAM core domain is found at 93-312; sequence FSHGTATFMI…EEYGNALGFS (220 aa).

It belongs to the radical SAM superfamily. Lipoyl synthase family. [4Fe-4S] cluster is required as a cofactor.

The protein resides in the cytoplasm. It carries out the reaction [[Fe-S] cluster scaffold protein carrying a second [4Fe-4S](2+) cluster] + N(6)-octanoyl-L-lysyl-[protein] + 2 oxidized [2Fe-2S]-[ferredoxin] + 2 S-adenosyl-L-methionine + 4 H(+) = [[Fe-S] cluster scaffold protein] + N(6)-[(R)-dihydrolipoyl]-L-lysyl-[protein] + 4 Fe(3+) + 2 hydrogen sulfide + 2 5'-deoxyadenosine + 2 L-methionine + 2 reduced [2Fe-2S]-[ferredoxin]. Its pathway is protein modification; protein lipoylation via endogenous pathway; protein N(6)-(lipoyl)lysine from octanoyl-[acyl-carrier-protein]: step 2/2. Catalyzes the radical-mediated insertion of two sulfur atoms into the C-6 and C-8 positions of the octanoyl moiety bound to the lipoyl domains of lipoate-dependent enzymes, thereby converting the octanoylated domains into lipoylated derivatives. The sequence is that of Lipoyl synthase from Xanthomonas campestris pv. campestris (strain 8004).